A 124-amino-acid polypeptide reads, in one-letter code: Putative melanoma-associated antigen 5P (124 aa).

The span at 1 to 14 (MSLEQKSQHCKPEE) shows a compositional bias: basic and acidic residues. Disordered regions lie at residues 1-69 (MSLE…QGAS) and 82-103 (QSIK…DPES). The MAGE domain maps to 3–124 (LEQKSQHCKP…DLIHFLLLKY (122 aa)). Polar residues-rich tracts occupy residues 30 to 44 (AATT…SSSP) and 82 to 100 (QSIK…TSPD).

In terms of tissue distribution, expressed in many tumors of several types, such as melanoma, head and neck squamous cell carcinoma, lung carcinoma and breast carcinoma, but not in normal tissues except for testes.

Functionally, may negatively regulates apoptosis. The chain is Putative melanoma-associated antigen 5P from Homo sapiens (Human).